A 59-amino-acid chain; its full sequence is Large ribosomal subunit protein uL30 (59 aa).

It belongs to the universal ribosomal protein uL30 family. As to quaternary structure, part of the 50S ribosomal subunit.

This Aliivibrio fischeri (strain MJ11) (Vibrio fischeri) protein is Large ribosomal subunit protein uL30.